Here is a 106-residue protein sequence, read N- to C-terminus: Pyrimidine/purine nucleoside phosphorylase (106 aa).

This sequence belongs to the nucleoside phosphorylase PpnP family.

The catalysed reaction is a purine D-ribonucleoside + phosphate = a purine nucleobase + alpha-D-ribose 1-phosphate. The enzyme catalyses adenosine + phosphate = alpha-D-ribose 1-phosphate + adenine. It carries out the reaction cytidine + phosphate = cytosine + alpha-D-ribose 1-phosphate. It catalyses the reaction guanosine + phosphate = alpha-D-ribose 1-phosphate + guanine. The catalysed reaction is inosine + phosphate = alpha-D-ribose 1-phosphate + hypoxanthine. The enzyme catalyses thymidine + phosphate = 2-deoxy-alpha-D-ribose 1-phosphate + thymine. It carries out the reaction uridine + phosphate = alpha-D-ribose 1-phosphate + uracil. It catalyses the reaction xanthosine + phosphate = alpha-D-ribose 1-phosphate + xanthine. In terms of biological role, catalyzes the phosphorolysis of diverse nucleosides, yielding D-ribose 1-phosphate and the respective free bases. Can use uridine, adenosine, guanosine, cytidine, thymidine, inosine and xanthosine as substrates. Also catalyzes the reverse reactions. The chain is Pyrimidine/purine nucleoside phosphorylase from Paraburkholderia xenovorans (strain LB400).